The chain runs to 408 residues: Secreted effector protein SseJ (408 aa).

The active-site Nucleophile is Ser-151. Residues Asp-381 and His-384 contribute to the active site.

The protein belongs to the 'GDSL' lipolytic enzyme family. In terms of assembly, interacts with RhoA and indirectly with SifA.

It is found in the secreted. It localises to the host cytoplasm. In terms of biological role, effector proteins function to alter host cell physiology and promote bacterial survival in host tissues. This protein is required for endosomal tubulation and negatively regulates the formation of Salmonella-induced filaments (Sifs) in epithelial cells. Has both deacylase and esterification activities in vitro, but esterification is probably the dominant activity in host cells. Significantly contributes to cholesterol esterification, which reduces cellular cholesterol in cells and abrogates the ability of SifA to associate with cholesterol and LAMP-1 vesicles. This is Secreted effector protein SseJ (sseJ) from Salmonella typhimurium (strain LT2 / SGSC1412 / ATCC 700720).